A 466-amino-acid polypeptide reads, in one-letter code: GTPase Der (466 aa).

2 EngA-type G domains span residues 30-193 (PVVA…PEVS) and 203-376 (RRVA…ASWD). Residues 36–43 (GRPNVGKS), 83–87 (DTGGW), 145–148 (NKVD), 209–216 (GKPNVGKS), 256–260 (DTAGL), and 321–324 (NKWD) contribute to the GTP site. A KH-like domain is found at 377–459 (TRIATGPLNS…PIRINVRVRE (83 aa)).

This sequence belongs to the TRAFAC class TrmE-Era-EngA-EngB-Septin-like GTPase superfamily. EngA (Der) GTPase family. As to quaternary structure, associates with the 50S ribosomal subunit.

Its function is as follows. GTPase that plays an essential role in the late steps of ribosome biogenesis. The sequence is that of GTPase Der from Mycobacterium avium (strain 104).